Reading from the N-terminus, the 564-residue chain is uncharacterized protein (564 aa).

Over residues 1–17 the composition is skewed to polar residues; the sequence is MRRPSTASLTRTPSRAS. Residues 1-564 are disordered; the sequence is MRRPSTASLT…ASTPSSEVIS (564 aa). Composition is skewed to low complexity over residues 79–97 and 114–134; these read SPRT…RASP and SPTG…ASPT. The span at 153-168 shows a compositional bias: polar residues; sequence RSPSTASLTRTPSRAS. Over residues 170-179 the composition is skewed to low complexity; the sequence is TRWPPRASPT. Residues 250 to 271 show a composition bias toward pro residues; sequence GSPPRASPMTPPRASPRTPPRA. Low complexity predominate over residues 272 to 299; it reads SPTTTPSRASLTRTPSWASPTTTPSRAS. Positions 318–351 are enriched in polar residues; that stretch reads PTGTPSRASPTGTPSRASLTGSPSRASLTGTPSR. Residues 378-416 are compositionally biased toward low complexity; sequence RASLTGTSSTASLTRTPSRASLTRTQSSSSLTRTPSMAS. Polar residues predominate over residues 467–564; the sequence is SRASLTRTPS…ASTPSSEVIS (98 aa).

This is an uncharacterized protein from Homo sapiens (Human).